An 848-amino-acid polypeptide reads, in one-letter code: DNA mismatch repair protein MutS (848 aa).

605–612 (GPNMAGKS) is an ATP binding site.

It belongs to the DNA mismatch repair MutS family.

In terms of biological role, this protein is involved in the repair of mismatches in DNA. It is possible that it carries out the mismatch recognition step. This protein has a weak ATPase activity. This is DNA mismatch repair protein MutS from Leptospira borgpetersenii serovar Hardjo-bovis (strain JB197).